A 226-amino-acid polypeptide reads, in one-letter code: Deoxyribose-phosphate aldolase (226 aa).

Asp-94 serves as the catalytic Proton donor/acceptor. Residue Lys-156 is the Schiff-base intermediate with acetaldehyde of the active site. Lys-185 serves as the catalytic Proton donor/acceptor.

It belongs to the DeoC/FbaB aldolase family. DeoC type 1 subfamily.

It localises to the cytoplasm. The catalysed reaction is 2-deoxy-D-ribose 5-phosphate = D-glyceraldehyde 3-phosphate + acetaldehyde. The protein operates within carbohydrate degradation; 2-deoxy-D-ribose 1-phosphate degradation; D-glyceraldehyde 3-phosphate and acetaldehyde from 2-deoxy-alpha-D-ribose 1-phosphate: step 2/2. Its function is as follows. Catalyzes a reversible aldol reaction between acetaldehyde and D-glyceraldehyde 3-phosphate to generate 2-deoxy-D-ribose 5-phosphate. The sequence is that of Deoxyribose-phosphate aldolase from Burkholderia lata (strain ATCC 17760 / DSM 23089 / LMG 22485 / NCIMB 9086 / R18194 / 383).